The primary structure comprises 26 residues: Small toxic protein ShoB (26 aa).

A helical membrane pass occupies residues 7-24 (LIKRVIKIIIAVLQLILL).

The protein resides in the membrane. Functionally, toxic component of a type I toxin-antitoxin (TA) system. May be a toxic protein; overexpression causes cessation of growth and rapid membrane depolarization. Overexpression induces stress-response and a number of membrane protein genes. This Escherichia coli (strain K12) protein is Small toxic protein ShoB (shoB).